Reading from the N-terminus, the 120-residue chain is Large ribosomal subunit protein uL18 (120 aa).

Belongs to the universal ribosomal protein uL18 family. Part of the 50S ribosomal subunit; part of the 5S rRNA/L5/L18/L25 subcomplex. Contacts the 5S and 23S rRNAs.

In terms of biological role, this is one of the proteins that bind and probably mediate the attachment of the 5S RNA into the large ribosomal subunit, where it forms part of the central protuberance. In Azorhizobium caulinodans (strain ATCC 43989 / DSM 5975 / JCM 20966 / LMG 6465 / NBRC 14845 / NCIMB 13405 / ORS 571), this protein is Large ribosomal subunit protein uL18.